Here is an 836-residue protein sequence, read N- to C-terminus: Probable ribonuclease ZC3H12B (836 aa).

The tract at residues 1–92 (MTATAEVETP…SPCLDRPSFS (92 aa)) is disordered. Residues 8–28 (ETPKMEKSASKEEKQQPKQDS) show a composition bias toward basic and acidic residues. Acidic residues predominate over residues 35-46 (DSEEWMSSESDP). Residues 50–60 (SLKSSDNSKSC) show a composition bias toward polar residues. A compositionally biased stretch (basic residues) spans 70-80 (KEMHSKPHRQL). The 156-residue stretch at 190–345 (LRPVVIDGSN…LGRHGPSLEN (156 aa)) folds into the RNase NYN domain. The C3H1-type zinc-finger motif lies at 355-380 (EHKKQPCPYGKKCTYGHKCKYYHPER).

The protein belongs to the ZC3H12 family. It depends on Mg(2+) as a cofactor.

May function as RNase and regulate the levels of target RNA species. This Homo sapiens (Human) protein is Probable ribonuclease ZC3H12B (ZC3H12B).